Reading from the N-terminus, the 415-residue chain is 1-deoxy-D-xylulose 5-phosphate reductoisomerase (415 aa).

Positions 10, 11, 12, 13, 36, 37, 38, and 128 each coordinate NADPH. 1-deoxy-D-xylulose 5-phosphate is bound at residue K129. E130 is an NADPH binding site. Position 154 (D154) interacts with Mn(2+). 4 residues coordinate 1-deoxy-D-xylulose 5-phosphate: S155, E156, S192, and H215. E156 contributes to the Mn(2+) binding site. Position 221 (G221) interacts with NADPH. 1-deoxy-D-xylulose 5-phosphate is bound by residues S228, N233, K234, and E237. A Mn(2+)-binding site is contributed by E237.

This sequence belongs to the DXR family. It depends on Mg(2+) as a cofactor. Mn(2+) serves as cofactor.

The enzyme catalyses 2-C-methyl-D-erythritol 4-phosphate + NADP(+) = 1-deoxy-D-xylulose 5-phosphate + NADPH + H(+). It functions in the pathway isoprenoid biosynthesis; isopentenyl diphosphate biosynthesis via DXP pathway; isopentenyl diphosphate from 1-deoxy-D-xylulose 5-phosphate: step 1/6. Catalyzes the NADPH-dependent rearrangement and reduction of 1-deoxy-D-xylulose-5-phosphate (DXP) to 2-C-methyl-D-erythritol 4-phosphate (MEP). The chain is 1-deoxy-D-xylulose 5-phosphate reductoisomerase from Synechococcus sp. (strain CC9605).